The sequence spans 135 residues: Small ribosomal subunit protein uS11 (135 aa).

A disordered region spans residues 1–26 (MPPKSRTAGGARKTRRKEKKNVSHGH). Over residues 12 to 23 (RKTRRKEKKNVS) the composition is skewed to basic residues.

This sequence belongs to the universal ribosomal protein uS11 family. In terms of assembly, part of the 30S ribosomal subunit. Interacts with proteins S7 and S18. Binds to IF-3.

Functionally, located on the platform of the 30S subunit, it bridges several disparate RNA helices of the 16S rRNA. Forms part of the Shine-Dalgarno cleft in the 70S ribosome. The polypeptide is Small ribosomal subunit protein uS11 (Beutenbergia cavernae (strain ATCC BAA-8 / DSM 12333 / CCUG 43141 / JCM 11478 / NBRC 16432 / NCIMB 13614 / HKI 0122)).